The sequence spans 240 residues: Glutamine amidotransferase-like protein chry6 (240 aa).

Positions 13 to 205 constitute a Glutamine amidotransferase type-1 domain; sequence NFILDDTGGR…FVASDNPVLV (193 aa). Cys102 serves as the catalytic Nucleophile. Residues His185 and Glu187 contribute to the active site.

This sequence belongs to the peptidase C26 family.

Its pathway is pigment biosynthesis. Functionally, glutamine amidotransferase-like protein; part of the gene cluster that mediates the biosynthesis of the yellow pigment chrysogine. Pyruvic acid and anthranilic acid are likely substrates for the nonribosomal peptide synthetase chry1/NRPS14, with pyruvic acid adenylated by the first A domain and anthranilic acid by the second. If pyruvic acid and anthranilic acid are merged and released from chry1/NRPS14 by hydrolysis, a subsequent amidation would lead to 2-pyruvoylaminobenzamide. This process is probably catalyzed by the amidotransferase chry2 using glutamine as amino donor. The dehydrogenase chry5 that has a terminal berberine bridge domain for C-N cyclization could catalyze the cyclization of 2-pyruvoylaminobenzamide to yield acetyl-4(3H)-quinazolidinone. A final reduction of acetyl-4(3H)-quinazolidinone catalyzed by the oxidoreductase chry4 would result in chrysogine. The polypeptide is Glutamine amidotransferase-like protein chry6 (Gibberella zeae (strain ATCC MYA-4620 / CBS 123657 / FGSC 9075 / NRRL 31084 / PH-1) (Wheat head blight fungus)).